The chain runs to 264 residues: Undecaprenyl-diphosphatase (264 aa).

Transmembrane regions (helical) follow at residues 34–54 (LLNLPIAIAYSFGLFMEMGSI), 75–95 (LLYLAIITIITGLVGVPLYII), 104–124 (YDPSIPMIILGIALIVDGLYI), 137–157 (LSLKNIILIGIAQGLAALPGV), 180–200 (YSYLAYIPAAVGAVGTTILFS), 207–227 (VISLIGIGGVLISVISAFIIG), and 243–263 (IYIIDFTLGGIAIVVSVLTIL).

This sequence belongs to the UppP family.

Its subcellular location is the cell membrane. It carries out the reaction di-trans,octa-cis-undecaprenyl diphosphate + H2O = di-trans,octa-cis-undecaprenyl phosphate + phosphate + H(+). Catalyzes the dephosphorylation of undecaprenyl diphosphate (UPP). This chain is Undecaprenyl-diphosphatase, found in Sulfurisphaera tokodaii (strain DSM 16993 / JCM 10545 / NBRC 100140 / 7) (Sulfolobus tokodaii).